The sequence spans 184 residues: Putative lyase MJ0807 (184 aa).

It belongs to the chorismate pyruvate-lyase type 2 family.

The polypeptide is Putative lyase MJ0807 (Methanocaldococcus jannaschii (strain ATCC 43067 / DSM 2661 / JAL-1 / JCM 10045 / NBRC 100440) (Methanococcus jannaschii)).